A 369-amino-acid chain; its full sequence is ATP-dependent 6-phosphofructokinase (369 aa).

ATP is bound by residues Gly15, 81–82, and 108–111; these read KG and GDGS. Asp109 provides a ligand contact to Mg(2+). Substrate contacts are provided by residues 132-134, Arg169, 176-178, Glu230, Arg266, and 272-275; these read TID, MGR, and HIQR. Asp134 (proton acceptor) is an active-site residue.

It belongs to the phosphofructokinase type A (PFKA) family. Mixed-substrate PFK group III subfamily. Homodimer or homotetramer. Mg(2+) is required as a cofactor.

Its subcellular location is the cytoplasm. The enzyme catalyses beta-D-fructose 6-phosphate + ATP = beta-D-fructose 1,6-bisphosphate + ADP + H(+). The protein operates within carbohydrate degradation; glycolysis; D-glyceraldehyde 3-phosphate and glycerone phosphate from D-glucose: step 3/4. In terms of biological role, catalyzes the phosphorylation of D-fructose 6-phosphate to fructose 1,6-bisphosphate by ATP, the first committing step of glycolysis. The protein is ATP-dependent 6-phosphofructokinase of Thermosynechococcus vestitus (strain NIES-2133 / IAM M-273 / BP-1).